We begin with the raw amino-acid sequence, 453 residues long: Probable glucan endo-1,3-beta-glucosidase eglC (453 aa).

The signal sequence occupies residues 1 to 18 (MQTRQLLALALAVAATEA). The Proton donor role is filled by E128. N-linked (GlcNAc...) asparagine glycosylation occurs at N183. E239 serves as the catalytic Nucleophile. N364, N368, and N376 each carry an N-linked (GlcNAc...) asparagine glycan. Residues 370–380 (TYPGSWNSTRP) show a composition bias toward polar residues. Residues 370–423 (TYPGSWNSTRPGANGGSSGSSGSSGSSGSSGSSGSSGSGASGHSSSTGSSSFPS) form a disordered region. Low complexity-rich tracts occupy residues 389–402 (SSGS…SGSS) and 410–423 (SGHS…SFPS). N430 is lipidated: GPI-anchor amidated asparagine. The propeptide at 431–453 (SASGLSGSLFGAVAAVFVALAAL) is removed in mature form.

It belongs to the glycosyl hydrolase 17 family. The GPI-anchor is attached to the protein in the endoplasmic reticulum and serves to target the protein to the cell surface. There, the glucosamine-inositol phospholipid moiety is cleaved off and the GPI-modified mannoprotein is covalently attached via its lipidless GPI glycan remnant to the 1,6-beta-glucan of the outer cell wall layer.

It localises to the cell membrane. The protein localises to the secreted. Its subcellular location is the cell wall. It carries out the reaction Hydrolysis of (1-&gt;3)-beta-D-glucosidic linkages in (1-&gt;3)-beta-D-glucans.. Its function is as follows. Glucanases play a role in cell expansion during growth, in cell-cell fusion during mating, and in spore release during sporulation. This enzyme may be involved in beta-glucan degradation and also function biosynthetically as a transglycosylase. This chain is Probable glucan endo-1,3-beta-glucosidase eglC (eglC), found in Aspergillus clavatus (strain ATCC 1007 / CBS 513.65 / DSM 816 / NCTC 3887 / NRRL 1 / QM 1276 / 107).